We begin with the raw amino-acid sequence, 557 residues long: Dihydroxy-acid dehydratase (557 aa).

Cys47 contributes to the [2Fe-2S] cluster binding site. Asp79 is a binding site for Mg(2+). Cys120 is a [2Fe-2S] cluster binding site. Residues Asp121 and Lys122 each contribute to the Mg(2+) site. Lys122 carries the N6-carboxylysine modification. Cys192 lines the [2Fe-2S] cluster pocket. Glu444 provides a ligand contact to Mg(2+). Ser470 functions as the Proton acceptor in the catalytic mechanism.

Belongs to the IlvD/Edd family. As to quaternary structure, homodimer. The cofactor is [2Fe-2S] cluster. Requires Mg(2+) as cofactor.

It catalyses the reaction (2R)-2,3-dihydroxy-3-methylbutanoate = 3-methyl-2-oxobutanoate + H2O. The catalysed reaction is (2R,3R)-2,3-dihydroxy-3-methylpentanoate = (S)-3-methyl-2-oxopentanoate + H2O. Its pathway is amino-acid biosynthesis; L-isoleucine biosynthesis; L-isoleucine from 2-oxobutanoate: step 3/4. The protein operates within amino-acid biosynthesis; L-valine biosynthesis; L-valine from pyruvate: step 3/4. Its function is as follows. Functions in the biosynthesis of branched-chain amino acids. Catalyzes the dehydration of (2R,3R)-2,3-dihydroxy-3-methylpentanoate (2,3-dihydroxy-3-methylvalerate) into 2-oxo-3-methylpentanoate (2-oxo-3-methylvalerate) and of (2R)-2,3-dihydroxy-3-methylbutanoate (2,3-dihydroxyisovalerate) into 2-oxo-3-methylbutanoate (2-oxoisovalerate), the penultimate precursor to L-isoleucine and L-valine, respectively. The protein is Dihydroxy-acid dehydratase of Synechococcus sp. (strain CC9902).